The sequence spans 634 residues: 1-deoxy-D-xylulose-5-phosphate synthase (634 aa).

Thiamine diphosphate-binding positions include histidine 73 and glycine 114–serine 116. Aspartate 145 contributes to the Mg(2+) binding site. Thiamine diphosphate-binding positions include glycine 146–serine 147, asparagine 174, phenylalanine 285, and glutamate 367. Asparagine 174 is a binding site for Mg(2+).

It belongs to the transketolase family. DXPS subfamily. Homodimer. It depends on Mg(2+) as a cofactor. The cofactor is thiamine diphosphate.

It catalyses the reaction D-glyceraldehyde 3-phosphate + pyruvate + H(+) = 1-deoxy-D-xylulose 5-phosphate + CO2. It functions in the pathway metabolic intermediate biosynthesis; 1-deoxy-D-xylulose 5-phosphate biosynthesis; 1-deoxy-D-xylulose 5-phosphate from D-glyceraldehyde 3-phosphate and pyruvate: step 1/1. In terms of biological role, catalyzes the acyloin condensation reaction between C atoms 2 and 3 of pyruvate and glyceraldehyde 3-phosphate to yield 1-deoxy-D-xylulose-5-phosphate (DXP). In Syntrophotalea carbinolica (strain DSM 2380 / NBRC 103641 / GraBd1) (Pelobacter carbinolicus), this protein is 1-deoxy-D-xylulose-5-phosphate synthase.